Consider the following 264-residue polypeptide: Myozenin-2 (264 aa).

The residue at position 53 (arginine 53) is an Omega-N-methylarginine. Positions 98–134 (ESGSQQAPFTPPNTPDPRSPPNPENIAPGYSGPLKEI) are disordered. Residue serine 101 is modified to Phosphoserine. Positions 106–120 (FTPPNTPDPRSPPNP) are enriched in pro residues. Threonine 107 and threonine 111 each carry phosphothreonine. Serine 116 carries the post-translational modification Phosphoserine.

The protein belongs to the myozenin family. As to quaternary structure, interacts via its C-terminus with spectrin repeats 3 and 4 of ACTN2. Interacts with ACTN1, LDB3, MYOT and PPP3CA.

The protein resides in the cytoplasm. It is found in the myofibril. The protein localises to the sarcomere. Its subcellular location is the z line. In terms of biological role, myozenins may serve as intracellular binding proteins involved in linking Z line proteins such as alpha-actinin, gamma-filamin, TCAP/telethonin, LDB3/ZASP and localizing calcineurin signaling to the sarcomere. Plays an important role in the modulation of calcineurin signaling. May play a role in myofibrillogenesis. This is Myozenin-2 (MYOZ2) from Bos taurus (Bovine).